The primary structure comprises 103 residues: Ghrelin (103 aa).

The first 26 residues, 1–26 (MPLRRRASHMFVLLCALSLCVESVKG), serve as a signal peptide directing secretion. A disordered region spans residues 27-51 (GTSFLSPAQKPQGRRPPRMGRRDVA). S29 carries the O-decanoyl serine; alternate lipid modification. The O-hexanoyl serine; alternate moiety is linked to residue S29. The O-octanoyl serine; alternate moiety is linked to residue S29. A Glutamine amide modification is found at Q38. Methionine amide is present on M45. A propeptide spans 49–103 (DVAEPEIPVIKEDDQFMMSAPFELSVSLSEAEYEKYGPVLQKVLVNLLGDSPLEF) (removed in mature form).

Belongs to the motilin family. Post-translationally, O-octanoylated by GOAT/MBOAT4. O-octanoylation or O-decanoylation is essential for activity. The O-decanoylated form differs in the length of the carbon backbone of the carboxylic acid forming an ester bond with Ser-29. In terms of tissue distribution, expressed in the telencephalon, hypothalamus, pituitary, intestine, liver, spleen and gill, with expression strongest in the intestine.

The protein localises to the secreted. Functionally, ligand for growth hormone secretagogue receptor type 1 (GHSR). Induces the release of growth hormone from the pituitary. Induces adiposity and stimulates gastric acid secretion. Involved in growth regulation. Has an appetite-stimulating effect. This chain is Ghrelin (ghrl), found in Carassius auratus (Goldfish).